The chain runs to 418 residues: 3-phosphoshikimate 1-carboxyvinyltransferase (418 aa).

3-phosphoshikimate contacts are provided by Lys26, Ser27, and Arg31. Residue Lys26 coordinates phosphoenolpyruvate. Positions 97 and 125 each coordinate phosphoenolpyruvate. Positions 170, 171, 172, 297, 320, and 324 each coordinate 3-phosphoshikimate. Residue Gln172 coordinates phosphoenolpyruvate. Residue Asp297 is the Proton acceptor of the active site. Phosphoenolpyruvate contacts are provided by Arg328, Arg375, and Lys400.

This sequence belongs to the EPSP synthase family. As to quaternary structure, monomer.

It is found in the cytoplasm. The catalysed reaction is 3-phosphoshikimate + phosphoenolpyruvate = 5-O-(1-carboxyvinyl)-3-phosphoshikimate + phosphate. It participates in metabolic intermediate biosynthesis; chorismate biosynthesis; chorismate from D-erythrose 4-phosphate and phosphoenolpyruvate: step 6/7. Its function is as follows. Catalyzes the transfer of the enolpyruvyl moiety of phosphoenolpyruvate (PEP) to the 5-hydroxyl of shikimate-3-phosphate (S3P) to produce enolpyruvyl shikimate-3-phosphate and inorganic phosphate. This chain is 3-phosphoshikimate 1-carboxyvinyltransferase, found in Pseudomonas syringae pv. tomato (strain ATCC BAA-871 / DC3000).